Consider the following 288-residue polypeptide: Bifunctional protein FolD (288 aa).

Residues 166–168 (GAS) and I232 each bind NADP(+).

This sequence belongs to the tetrahydrofolate dehydrogenase/cyclohydrolase family. In terms of assembly, homodimer.

It carries out the reaction (6R)-5,10-methylene-5,6,7,8-tetrahydrofolate + NADP(+) = (6R)-5,10-methenyltetrahydrofolate + NADPH. It catalyses the reaction (6R)-5,10-methenyltetrahydrofolate + H2O = (6R)-10-formyltetrahydrofolate + H(+). The protein operates within one-carbon metabolism; tetrahydrofolate interconversion. Catalyzes the oxidation of 5,10-methylenetetrahydrofolate to 5,10-methenyltetrahydrofolate and then the hydrolysis of 5,10-methenyltetrahydrofolate to 10-formyltetrahydrofolate. The polypeptide is Bifunctional protein FolD (Shigella dysenteriae serotype 1 (strain Sd197)).